Here is a 302-residue protein sequence, read N- to C-terminus: MARVTTGITSSHIPALGAAIQTGTSDNDYWGPVFKGYQPIRDWIKQPGNMPDVVILVYNDHASAFDMNIIPTFAIGCAETFKPADEGWGPRPVPDVKGHPDLAWHIAQSLILDEFDMTIMNQMDVDHGCTVPLSMIFGEPEEWPCKVIPFPVNVVTYPPPSGKRCFALGDSIRAAVESFPEDLNVHVWGTGGMSHQLQGPRAGLINKEFDLNFIDKLISDPEELSKMPHIQYLRESGSEGVELVMWLIMRGALPEKVRDLYTFYHIPASNTALGAMILQPEETAGTPLEPRKVMSGHSLAQA.

Composed of two subunits (alpha and beta) in a 1:1 ratio. It depends on Fe(2+) as a cofactor.

It carries out the reaction 3,4-dihydroxybenzoate + O2 = 4-carboxy-2-hydroxy-cis,cis-muconate 6-semialdehyde + H(+). Responsible for the aromatic ring fission of protocatechuate. The polypeptide is Protocatechuate 4,5-dioxygenase beta chain (ligB) (Sphingobium sp. (strain NBRC 103272 / SYK-6)).